Here is a 247-residue protein sequence, read N- to C-terminus: Caffeoyl-CoA O-methyltransferase 2 (247 aa).

Lys21 is a binding site for substrate. S-adenosyl-L-methionine contacts are provided by residues Thr63, Glu85, Gly87–Val88, Ser93, Asp111, and Ala140. Asp163 provides a ligand contact to substrate. Asp163 is a binding site for a divalent metal cation. Asp165 is an S-adenosyl-L-methionine binding site. Residues Asp189 and Asn190 each coordinate a divalent metal cation. Asn194 provides a ligand contact to substrate.

Belongs to the class I-like SAM-binding methyltransferase superfamily. Cation-dependent O-methyltransferase family. CCoAMT subfamily. It depends on a divalent metal cation as a cofactor.

The catalysed reaction is (E)-caffeoyl-CoA + S-adenosyl-L-methionine = (E)-feruloyl-CoA + S-adenosyl-L-homocysteine + H(+). It functions in the pathway aromatic compound metabolism; phenylpropanoid biosynthesis. In terms of biological role, methylates caffeoyl-CoA to feruloyl-CoA and 5-hydroxyferuloyl-CoA to sinapoyl-CoA. Plays a role in the synthesis of feruloylated polysaccharides. Involved in the reinforcement of the plant cell wall. Also involved in the responding to wounding or pathogen challenge by the increased formation of cell wall-bound ferulic acid polymers. This Eucalyptus globulus (Tasmanian blue gum) protein is Caffeoyl-CoA O-methyltransferase 2 (CCOAOMT2).